Consider the following 1133-residue polypeptide: MSRYMQRPENALKRANEFIEVGKPARALDTLQEVFRIKKWTYTWSESVIEPIMFKYLDLCVELKKSHIAKEGLFQYRNMFQLVNVGSLENVIRGYLKMAEERTEAAQQQSSQAILDIDDLDNLATPESILMSAVCGEDAQDRSDRTILLPWVKFLWESYCQCLELLKVNSHCENLYHDIAKMAFGFCLKYNRKMEFRKLCEKLRKHLEDISKVSSQTANVSISKPETQQLNLDTRLNQLDCAIQMELWLEAYKAIEDIHGLMTLSKKTPMPKTMALYYQKLAMVFWKAGNQLFHAAALLKLFQLSRDMKKNVTQEEIQRMTSHVLIATLAIPLPSAHPEFDRFIETDKSPLEKAQKLAVLLGLQQPPTRASLLKDVLRLNVLQLAAPQFQNLYKWLEVEFDPLNLCERVQNIIQEITVDENNPYAQYTQALQDVTLVRLVRQVSQVYQSIEFSRFLALAKFSTSFYLERILVDCVRHNDMQITIDHRNHCVHFGTDLSESQREDHPDGPTLQSMPSEQVRSQLVNMSVVLHRAIATINPNRNKAERDRLRAQMVKSYEENMVKEHQRILQRQKKIEDRKEYIERVNLEREEKELRELEEVARQHKLAEQRRLEQENEERERKRYENEVQMIKERNMKEKIDQIKQTAAGQKILKKFDEEDIKKMNAEEIAAKEAEERQKERKAHDNNLKSQEKKIDYFERAKRLEEIPLIEKYLEDKLVQDKQFWEKQEASRIEAAIAERKNAEAVQERLKRMQPDREIFWQKLKGERSNQFAEKLKAFNVALEEERKRRLTERVYERREERRQKWLREKEEERRRAEEEIRKQRQEEERIERERRAEERRIEDEKARLLEEKRRAREEEATKKAEENRQMQAKAREREREREADSWRDRRGGDAPAAAAQPNPAAQEATKPESGWRTAGAREPRGEDAPKKDGVYQPRFRDVRGGGAGGAGGVERRADDQESNKWRHGGDDGGKDDRDGPRRMGGDRPPMRRGGDDRDDRGPIRRGGDDRDDRGPIRRGDRPPMRDGERGVGMRREGGDRERRDGGDRRDFGGNRDRRDDRGGPRRDDRGDRGGDRDSAWRRPAPRGGDDGGNWRTRQDQAKPKDDRREERPKEARNTGPDEDGWTDVKHHR.

Residues 317–498 (IQRMTSHVLI…HCVHFGTDLS (182 aa)) form the PCI domain. Coiled-coil stretches lie at residues 573 to 700 (KKIE…YFER) and 784 to 886 (EEER…EADS). A compositionally biased stretch (basic and acidic residues) spans 810-893 (KEEERRRAEE…ADSWRDRRGG (84 aa)). The interval 810 to 1133 (KEEERRRAEE…DGWTDVKHHR (324 aa)) is disordered. Over residues 895 to 909 (APAAAAQPNPAAQEA) the composition is skewed to low complexity. 3 stretches are compositionally biased toward basic and acidic residues: residues 920–944 (GARE…RDVR), 954–1081 (VERR…DSAW), and 1097–1117 (TRQD…KEAR).

This sequence belongs to the eIF-3 subunit A family. In terms of assembly, component of the eukaryotic translation initiation factor 3 (eIF-3) complex.

The protein localises to the cytoplasm. RNA-binding component of the eukaryotic translation initiation factor 3 (eIF-3) complex, which is involved in protein synthesis of a specialized repertoire of mRNAs and, together with other initiation factors, stimulates binding of mRNA and methionyl-tRNAi to the 40S ribosome. The eIF-3 complex specifically targets and initiates translation of a subset of mRNAs involved in cell proliferation. The protein is Eukaryotic translation initiation factor 3 subunit A of Aedes aegypti (Yellowfever mosquito).